Here is a 247-residue protein sequence, read N- to C-terminus: Osmotin-like protein NP24-I (247 aa).

Positions Met1–Ala21 are cleaved as a signal peptide. 8 cysteine pairs are disulfide-bonded: Cys30-Cys225, Cys72-Cys82, Cys87-Cys93, Cys141-Cys213, Cys146-Cys196, Cys154-Cys164, Cys168-Cys177, and Cys178-Cys183.

This sequence belongs to the thaumatin family. In terms of tissue distribution, highest levels of both isoforms found in the outer pericarp, with smaller amounts in the inner pericarp.

It is found in the cytoplasm. The protein localises to the vacuole. It catalyses the reaction Endohydrolysis of (1-&gt;3)- or (1-&gt;4)-linkages in beta-D-glucans when the glucose residue whose reducing group is involved in the linkage to be hydrolyzed is itself substituted at C-3.. In terms of biological role, has antifungal activity against P.betae and F.dahliae. May be involved in disease resistance in tomatoes and/or have a possible role in fruit development and ripening. Binds to beta-glucans and exhibits beta-1,3-D-glucanase activity. This Solanum lycopersicum (Tomato) protein is Osmotin-like protein NP24-I.